Here is a 446-residue protein sequence, read N- to C-terminus: tRNA-2-methylthio-N(6)-dimethylallyladenosine synthase (446 aa).

One can recognise an MTTase N-terminal domain in the interval K5–R121. Positions 14, 50, 84, 159, 163, and 166 each coordinate [4Fe-4S] cluster. Residues G145–E375 enclose the Radical SAM core domain. The TRAM domain maps to I378 to T440.

Belongs to the methylthiotransferase family. MiaB subfamily. Monomer. The cofactor is [4Fe-4S] cluster.

Its subcellular location is the cytoplasm. It catalyses the reaction N(6)-dimethylallyladenosine(37) in tRNA + (sulfur carrier)-SH + AH2 + 2 S-adenosyl-L-methionine = 2-methylsulfanyl-N(6)-dimethylallyladenosine(37) in tRNA + (sulfur carrier)-H + 5'-deoxyadenosine + L-methionine + A + S-adenosyl-L-homocysteine + 2 H(+). In terms of biological role, catalyzes the methylthiolation of N6-(dimethylallyl)adenosine (i(6)A), leading to the formation of 2-methylthio-N6-(dimethylallyl)adenosine (ms(2)i(6)A) at position 37 in tRNAs that read codons beginning with uridine. The sequence is that of tRNA-2-methylthio-N(6)-dimethylallyladenosine synthase from Geobacter sulfurreducens (strain ATCC 51573 / DSM 12127 / PCA).